The primary structure comprises 458 residues: ATP synthase subunit beta 2 (458 aa).

148 to 155 (GGAGVGKT) serves as a coordination point for ATP.

Belongs to the ATPase alpha/beta chains family. As to quaternary structure, F-type ATPases have 2 components, CF(1) - the catalytic core - and CF(0) - the membrane proton channel. CF(1) has five subunits: alpha(3), beta(3), gamma(1), delta(1), epsilon(1). CF(0) has three main subunits: a(1), b(2) and c(9-12). The alpha and beta chains form an alternating ring which encloses part of the gamma chain. CF(1) is attached to CF(0) by a central stalk formed by the gamma and epsilon chains, while a peripheral stalk is formed by the delta and b chains.

The protein resides in the cell inner membrane. The catalysed reaction is ATP + H2O + 4 H(+)(in) = ADP + phosphate + 5 H(+)(out). In terms of biological role, produces ATP from ADP in the presence of a proton gradient across the membrane. The catalytic sites are hosted primarily by the beta subunits. This chain is ATP synthase subunit beta 2, found in Marinomonas sp. (strain MWYL1).